Reading from the N-terminus, the 384-residue chain is S-adenosylmethionine synthase (384 aa).

An ATP-binding site is contributed by H15. Mg(2+) is bound at residue D17. Position 43 (E43) interacts with K(+). L-methionine contacts are provided by E56 and Q99. The interval 99–109 (QSPDINQGVDR) is flexible loop. ATP contacts are provided by residues 164-166 (DAK), 230-231 (RF), D239, 245-246 (RK), A262, and K266. D239 is a binding site for L-methionine. K270 serves as a coordination point for L-methionine.

It belongs to the AdoMet synthase family. In terms of assembly, homotetramer; dimer of dimers. It depends on Mg(2+) as a cofactor. The cofactor is K(+).

The protein localises to the cytoplasm. It carries out the reaction L-methionine + ATP + H2O = S-adenosyl-L-methionine + phosphate + diphosphate. It functions in the pathway amino-acid biosynthesis; S-adenosyl-L-methionine biosynthesis; S-adenosyl-L-methionine from L-methionine: step 1/1. Its function is as follows. Catalyzes the formation of S-adenosylmethionine (AdoMet) from methionine and ATP. The overall synthetic reaction is composed of two sequential steps, AdoMet formation and the subsequent tripolyphosphate hydrolysis which occurs prior to release of AdoMet from the enzyme. This chain is S-adenosylmethionine synthase, found in Klebsiella pneumoniae subsp. pneumoniae (strain ATCC 700721 / MGH 78578).